A 644-amino-acid chain; its full sequence is G-protein coupled receptor-associated protein LMBRD2 (644 aa).

Topologically, residues 1-4 (MGTV) are extracellular. The helical transmembrane segment at 5–27 (SLAVQLFIVFLLTSYLLNKYSTI) threads the bilayer. Topologically, residues 28–31 (RKQN) are cytoplasmic. The chain crosses the membrane as a helical span at residues 32–52 (PIVTISTFIGWYFSLIIVFVL). Residues 53-102 (PLDVAITFFHKCENDRQRVLNTTSTPAPIVPECELPGGYVPDDVLFDLWR) lie on the Extracellular side of the membrane. An N-linked (GlcNAc...) asparagine glycan is attached at asparagine 73. A helical membrane pass occupies residues 103–123 (VVYWSAQILTWLILPLLQSYV). The Cytoplasmic portion of the chain corresponds to 124 to 145 (TAGNFTIFGKIRAAVINNTVYY). The helical transmembrane segment at 146–166 (AIYSLCFLAILIYAMFKGVSI) threads the bilayer. Residues 167–172 (NIENLK) lie on the Extracellular side of the membrane. Residues 173-193 (VILVSASNTWGLFLLVVLLGH) traverse the membrane as a helical segment. The Cytoplasmic portion of the chain corresponds to 194–369 (GLVELPRSLW…RLQTPFCRVL (176 aa)). The stretch at 216-245 (YFDIEKLASEKSEAEENVKEIYKKVRVLFN) forms a coiled coil. Residues 370-390 (GVVTVFMTFFVLFSECTFFVV) traverse the membrane as a helical segment. The Extracellular portion of the chain corresponds to 391–412 (SYTVSPAAFVTEYASNRFHYKY). The helical transmembrane segment at 413-433 (TQFVAFGIIVYLITCAYFTIF) threads the bilayer. Over 434 to 453 (RLQIYKYYHLDPNGHTDENS) the chain is Cytoplasmic. The chain crosses the membrane as a helical span at residues 454 to 474 (ILFSAILLCRLTPPICLNFLG). Residues 475–502 (MIHMDSHVSMAKSFGVETQFTKLMGHLD) are Extracellular-facing. Residues 503 to 523 (VIPILAKGINIYLPICIILLC) form a helical membrane-spanning segment. Topologically, residues 524–644 (AIHYYRVGAY…PSSSGFFDDM (121 aa)) are cytoplasmic. A compositionally biased stretch (basic and acidic residues) spans 567–576 (SIKRSNERNQ). The segment at 567–644 (SIKRSNERNQ…PSSSGFFDDM (78 aa)) is disordered. Residues 578–594 (NQSWTNTITSNTSTTSN) are compositionally biased toward low complexity. The segment covering 621 to 644 (VSSTTRISLSPTEHPSSSGFFDDM) has biased composition (polar residues).

This sequence belongs to the LIMR family.

Its subcellular location is the cell membrane. Its function is as follows. May associate with G-protein coupled receptors and regulate downstream signaling pathways. This Caenorhabditis briggsae protein is G-protein coupled receptor-associated protein LMBRD2.